Reading from the N-terminus, the 86-residue chain is Parvalbumin beta 3 (86 aa).

Ala-1 is subject to N-acetylalanine. The region spanning 35–70 (LSPEEVKKFFAIIDQDHSGFIEEEELKLFLQTFSAG) is the EF-hand domain. Asp-48, Asp-50, Ser-52, Phe-54, Glu-56, and Glu-59 together coordinate Ca(2+).

The protein belongs to the parvalbumin family.

In muscle, parvalbumin is thought to be involved in relaxation after contraction. It binds two calcium ions. The polypeptide is Parvalbumin beta 3 (Merluccius hubbsi (Argentine hake)).